Consider the following 136-residue polypeptide: Acidic phospholipase A2 CC-PLA2-2 (136 aa).

An N-terminal signal peptide occupies residues 1–16; it reads MRTLWIVAVWLMGVEG. 7 disulfide bridges follow: cysteine 42-cysteine 129, cysteine 44-cysteine 60, cysteine 59-cysteine 109, cysteine 65-cysteine 136, cysteine 66-cysteine 102, cysteine 73-cysteine 95, and cysteine 90-cysteine 100. 3 residues coordinate Ca(2+): tyrosine 43, glycine 45, and glycine 47. The active site involves histidine 63. Aspartate 64 contributes to the Ca(2+) binding site. Residue aspartate 103 is part of the active site.

Belongs to the phospholipase A2 family. Group II subfamily. D49 sub-subfamily. Requires Ca(2+) as cofactor. In terms of processing, glycosylated (2.5%). In terms of tissue distribution, expressed by the venom gland.

The protein localises to the secreted. It catalyses the reaction a 1,2-diacyl-sn-glycero-3-phosphocholine + H2O = a 1-acyl-sn-glycero-3-phosphocholine + a fatty acid + H(+). In terms of biological role, snake venom phospholipase A2 that inhibits blood coagulation and platelet aggregation induced by ADP and arachidonic acid. Inhibits tumor cell adhesion and migration in a dose-dependent manner. Abolishes the attachment of human brain microvascular endothelial cells (HBMEC) to fibrinogen (IC(50)=0.2 uM) and dramatically reduces its adhesion to fibronectin (IC(50)=0.3 uM), whereas no effect is observed on type I collagen, vitronectin or laminin 1. Also blocks the cell migration toward fibronectin and fibrinogen. These effects are not dependent of the catalytic activity, but are mediated by alpha-5/beta-1 (ITGA5/ITGB1) and alpha-v-containing (ITGAV) integrins. Also shows anti-angiogenic activity in chicken chorioallantoix membrane assay. Has a relatively high enzymatic activity. PLA2 catalyzes the calcium-dependent hydrolysis of the 2-acyl groups in 3-sn-phosphoglycerides. The protein is Acidic phospholipase A2 CC-PLA2-2 of Cerastes cerastes (Horned desert viper).